The chain runs to 277 residues: Release factor glutamine methyltransferase (277 aa).

S-adenosyl-L-methionine is bound by residues 117 to 121 (GTGTG), D140, W168, and N183. 183-186 (NPPY) is a binding site for substrate.

This sequence belongs to the protein N5-glutamine methyltransferase family. PrmC subfamily.

The catalysed reaction is L-glutaminyl-[peptide chain release factor] + S-adenosyl-L-methionine = N(5)-methyl-L-glutaminyl-[peptide chain release factor] + S-adenosyl-L-homocysteine + H(+). Methylates the class 1 translation termination release factors RF1/PrfA and RF2/PrfB on the glutamine residue of the universally conserved GGQ motif. The polypeptide is Release factor glutamine methyltransferase (Shigella dysenteriae serotype 1 (strain Sd197)).